The sequence spans 394 residues: 3-dehydroquinate synthase (394 aa).

NAD(+)-binding positions include 112–116 (GVIGD), 136–137 (TT), K149, K158, and 176–179 (TLAT). E191, H254, and H276 together coordinate Zn(2+). Over residues 371 to 388 (STNQHTTYSPHQHATTKP) the composition is skewed to polar residues. Positions 371–394 (STNQHTTYSPHQHATTKPPNRRPH) are disordered.

Belongs to the sugar phosphate cyclases superfamily. Dehydroquinate synthase family. NAD(+) is required as a cofactor. Requires Co(2+) as cofactor. Zn(2+) serves as cofactor.

The protein localises to the cytoplasm. It catalyses the reaction 7-phospho-2-dehydro-3-deoxy-D-arabino-heptonate = 3-dehydroquinate + phosphate. It participates in metabolic intermediate biosynthesis; chorismate biosynthesis; chorismate from D-erythrose 4-phosphate and phosphoenolpyruvate: step 2/7. Catalyzes the conversion of 3-deoxy-D-arabino-heptulosonate 7-phosphate (DAHP) to dehydroquinate (DHQ). The sequence is that of 3-dehydroquinate synthase from Xylella fastidiosa (strain 9a5c).